Here is a 330-residue protein sequence, read N- to C-terminus: PDZ and LIM domain protein 4 (330 aa).

In terms of domain architecture, PDZ spans 1–84; sequence MTHSVTLRGP…HLTLSVSRPE (84 aa). Disordered stretches follow at residues 104 to 153 and 219 to 242; these read DPES…SNEA and EAGE…ASKL. Phosphoserine occurs at positions 107, 111, 115, 118, 119, 124, and 134. Over residues 108-122 the composition is skewed to polar residues; the sequence is QDCSPATSRRSSVSG. In terms of domain architecture, LIM zinc-binding spans 255 to 305; that stretch reads CTRCGHGIVGTIVKARDKLYHPECFMCSDCGLNLKQRGYFFLDERLYCENH.

As to quaternary structure, homodimer. Interacts (via C-terminus only or via combined C-terminus and LIM domain, but not LIM domain only) with PTPN13 (via the second or fourth PDZ domains). Found in a complex with PTPN13 and TRIP6. Interacts (via PDZ domain) with ACTN1 and ACTN2 (via C-terminal SDL residues). Interacts (via PDZ domain) with TRIP6 (via the second LIM domain or via the third LIM domain plus C-terminus). Interacts (via LIM domain) with GRIA1 (via C-terminus); this interaction as well as the interaction with alpha-actinin is required for their colocalization in early endosomes. Interacts with PDLIM1. Forms (via LIM domain) a heterodimer with PDLIM3. Interacts directly with SRC (via kinase domain and to a lesser extent the SH2 domain). Post-translationally, phosphorylated on tyrosine residue(s). Can be dephosphorylated by PTPN13. As to expression, expressed in several non-muscle tissues including lung, brain, ovary and uterus, and especially in epithelial cells at 14 dpc. In the uterus, high expression in the glandular epithelium, but absent in the simple columnar epithelium lining the uterus cavity.

The protein localises to the cytoplasm. The protein resides in the cytoskeleton. It is found in the cell projection. Its subcellular location is the dendritic spine. It localises to the early endosome membrane. The protein localises to the recycling endosome membrane. The protein resides in the nucleus. It is found in the perinuclear region. Its subcellular location is the lamellipodium. It localises to the synapse. The protein localises to the synaptosome. In terms of biological role, suppresses SRC activation by recognizing and binding to active SRC and facilitating PTPN13-mediated dephosphorylation of SRC 'Tyr-419' leading to its inactivation. Inactivated SRC dissociates from this protein allowing the initiation of a new SRC inactivation cycle. Involved in reorganization of the actin cytoskeleton. In nonmuscle cells, binds to ACTN1 (alpha-actinin-1), increases the affinity of ACTN1 to F-actin (filamentous actin), and promotes formation of actin stress fibers. Involved in regulation of the synaptic AMPA receptor transport in dendritic spines of hippocampal pyramidal neurons directing the receptors toward an insertion at the postsynaptic membrane. Links endosomal surface-internalized GRIA1-containing AMPA receptors to the alpha-actinin/actin cytoskeleton. Increases AMPA receptor-mediated excitatory postsynaptic currents in neurons. The protein is PDZ and LIM domain protein 4 (Pdlim4) of Mus musculus (Mouse).